Reading from the N-terminus, the 390-residue chain is Lipid-A-disaccharide synthase (390 aa).

Belongs to the LpxB family.

The enzyme catalyses a lipid X + a UDP-2-N,3-O-bis[(3R)-3-hydroxyacyl]-alpha-D-glucosamine = a lipid A disaccharide + UDP + H(+). It functions in the pathway bacterial outer membrane biogenesis; LPS lipid A biosynthesis. Functionally, condensation of UDP-2,3-diacylglucosamine and 2,3-diacylglucosamine-1-phosphate to form lipid A disaccharide, a precursor of lipid A, a phosphorylated glycolipid that anchors the lipopolysaccharide to the outer membrane of the cell. The chain is Lipid-A-disaccharide synthase from Haemophilus influenzae (strain PittGG).